A 270-amino-acid polypeptide reads, in one-letter code: L-aspartate dehydrogenase (270 aa).

Ala-123 and Asn-191 together coordinate NAD(+). The active site involves His-221.

This sequence belongs to the L-aspartate dehydrogenase family.

The catalysed reaction is L-aspartate + NADP(+) + H2O = oxaloacetate + NH4(+) + NADPH + H(+). It catalyses the reaction L-aspartate + NAD(+) + H2O = oxaloacetate + NH4(+) + NADH + H(+). The protein operates within cofactor biosynthesis; NAD(+) biosynthesis; iminoaspartate from L-aspartate (dehydrogenase route): step 1/1. Its function is as follows. Specifically catalyzes the NAD or NADP-dependent dehydrogenation of L-aspartate to iminoaspartate. The sequence is that of L-aspartate dehydrogenase from Methanocella arvoryzae (strain DSM 22066 / NBRC 105507 / MRE50).